The following is a 923-amino-acid chain: Cell cycle and apoptosis regulator protein 2 (923 aa).

A disordered region spans residues 1 to 35; the sequence is MSQFKRQRINPLPGGRNFSGTASTSLLGPPPGLLT. Threonine 35 is subject to Phosphothreonine. Lysine 112 is modified (N6-acetyllysine; by KAT8). Residue lysine 123 is modified to N6-methyllysine. A Phosphoserine modification is found at serine 124. Disordered regions lie at residues 178 to 218, 446 to 510, and 568 to 643; these read LNRF…KKPR, KAAE…PAVI, and VSPP…SEDL. Arginine 180 carries the post-translational modification Omega-N-methylarginine. The segment covering 188–200 has biased composition (basic and acidic residues); sequence GRLDQGRSDDYDS. N6-acetyllysine; by KAT8 is present on lysine 215. A compositionally biased stretch (low complexity) spans 446 to 458; it reads KAAEAAPPTQEAQ. Threonine 454 carries the post-translational modification Phosphothreonine; by ATM, ATR and CK2. Threonine 484 is subject to Phosphothreonine. At serine 569 the chain carries Phosphoserine. Basic and acidic residues predominate over residues 572 to 602; that stretch reads EPEKEEAAKEEATKEEEAIKEEVVKEPKDEA. Lysine 591 is covalently cross-linked (Glycyl lysine isopeptide (Lys-Gly) (interchain with G-Cter in SUMO2 and SUMO3); alternate). Lysine 591 is covalently cross-linked (Glycyl lysine isopeptide (Lys-Gly) (interchain with G-Cter in SUMO2); alternate). The interaction with MCC stretch occupies residues 610-670; that stretch reads ESEAPLKEDG…EEFAGAKLED (61 aa). Phosphoserine is present on residues serine 627, serine 675, serine 678, serine 681, serine 687, and serine 808. An interaction with NR1D1 region spans residues 704 to 923; it reads DCLLAFVFFD…VEKEEPAPSN (220 aa). Residues 829–909 adopt a coiled-coil conformation; sequence LENKIHTLEL…QLEIQRVVEK (81 aa). Position 897 is a phosphothreonine (threonine 897).

In terms of assembly, component of the DBIRD complex. Interacts with ZNF326/ZIRD; the interaction is direct. Interacts (via N-terminus) with SIRT1, which inhibits the deacetylation of substrates. Interacts (via N-terminus) with SUV39H1; this interaction abolishes the interaction with SIRT1. Component of a nuclear receptor-mediated transcription complex composed of at least ZNF335, CCAR2 and EMSY; the complex stimulates the transcription of nuclear receptor target genes such as SOX9 and HOXA1. Within the complex interacts with EMSY and interacts with ZNF335 (via C-terminus). Components of this complex may associate with components of a histone methylation complex to form a complex at least composed of ZNF335, HCFC1, CCAR2, EMSY, MKI67, RBBP5, ASH2L and WDR5. Within this complex, interacts with ASH2L. Interacts with NR1D1. Interacts (via N-terminus) with ESR1 and ESR2. Interacts (via N-terminus) with HDAC3 (via C-terminus). Interacts with HDAC1 and MED2F. Interacts with MCC. Interacts (via N-terminus) with NR1H2 and NR1H3 in a ligand-independent manner. Interacts with CSNK2A1. Interacts (via N-terminus) with p53/TP53. Interacts (via N-terminus) with BRCA1 (via the BRCT domains). Interacts (via N-terminus) with CHEK2 (via protein kinase domain). Interacts with PSEM3. Interacts (via N-terminus) with PSIA3 and SENP1. The sumoylated form shows a preferential interaction with SIRT1 as compared to its unmodified form. Interacts with CECR2; may form part of the CERF-1 and/or CEF-5 ISWI chromatin remodeling complexes in embryonic stem cells. In terms of processing, ATM/ATR-mediated phosphorylation at Thr-454 upon DNA damage promotes binding to SIRT1. Phosphorylation at Thr-454 promotes its sumoylation by switching the binding partner of CCAR2 from SENP1 to PIAS3. Acetylation at Lys-112 and Lys-215 by KAT8 prevents inhibitory binding to SIRT1 and increases its deacetylase activity. Post-translationally, genotoxic stress induces its sumoylation and sumoylation promotes the SIRT1-CCAR2 interaction which in turn inhibits SIRT1-mediated deacetylation of p53/TP53. Sumoylation leads to transcriptional activation of p53/TP53 by sequestering SIRT1 from p53/TP53. Desumoylated by SENP1. Expressed in gastric carcinoma tissue and the expression gradually increases with the progression of the carcinoma (at protein level). Expressed ubiquitously in normal tissues. Expressed in 84 to 100% of neoplastic breast, lung, and colon tissues.

Its subcellular location is the nucleus. It is found in the cytoplasm. The protein resides in the cytoskeleton. The protein localises to the spindle. Core component of the DBIRD complex, a multiprotein complex that acts at the interface between core mRNP particles and RNA polymerase II (RNAPII) and integrates transcript elongation with the regulation of alternative splicing: the DBIRD complex affects local transcript elongation rates and alternative splicing of a large set of exons embedded in (A + T)-rich DNA regions. Inhibits SIRT1 deacetylase activity leading to increasing levels of p53/TP53 acetylation and p53-mediated apoptosis. Inhibits SUV39H1 methyltransferase activity. Mediates ligand-dependent transcriptional activation by nuclear hormone receptors. Plays a critical role in maintaining genomic stability and cellular integrity following UV-induced genotoxic stress. Regulates the circadian expression of the core clock components NR1D1 and BMAL1. Enhances the transcriptional repressor activity of NR1D1 through stabilization of NR1D1 protein levels by preventing its ubiquitination and subsequent degradation. Represses the ligand-dependent transcriptional activation function of ESR2. Acts as a regulator of PCK1 expression and gluconeogenesis by a mechanism that involves, at least in part, both NR1D1 and SIRT1. Negatively regulates the deacetylase activity of HDAC3 and can alter its subcellular localization. Positively regulates the beta-catenin pathway (canonical Wnt signaling pathway) and is required for MCC-mediated repression of the beta-catenin pathway. Represses ligand-dependent transcriptional activation function of NR1H2 and NR1H3 and inhibits the interaction of SIRT1 with NR1H3. Plays an important role in tumor suppression through p53/TP53 regulation; stabilizes p53/TP53 by affecting its interaction with ubiquitin ligase MDM2. Represses the transcriptional activator activity of BRCA1. Inhibits SIRT1 in a CHEK2 and PSEM3-dependent manner and inhibits the activity of CHEK2 in vitro. This is Cell cycle and apoptosis regulator protein 2 (CCAR2) from Homo sapiens (Human).